Reading from the N-terminus, the 46-residue chain is Mu-segestritoxin-Sf1c (46 aa).

Intrachain disulfides connect Cys3–Cys19, Cys10–Cys22, Cys18–Cys42, and Cys24–Cys40. The interval 31 to 33 (RPW) is keys region for toxin activity.

The protein belongs to the neurotoxin 16 (SFI) family. As to expression, expressed by the venom gland.

The protein resides in the secreted. Its function is as follows. Insecticidal toxin. It inhibits insect voltage-gated sodium channels (Nav) by partially blocking the channel pore in DUM neurons from the American cockroach, not by acting as a gating modifier. The inhibition is only partially reversible after prolonged washout. In vivo, the toxin causes flaccid paralysis followed by death when injected into Heliothis virescens larvae. It also causes uncoordinated movements followed by full paralysis to sheep blowflies (Lucilia cuprina). When the toxin is fused to snowdrop lectin, it is orally active against larvae of the tomato moth (Laconobia oleracea), the rice brown planthopper (Nilaparvata lugens), and the peach-potato aphid (Myzus persicae). This is Mu-segestritoxin-Sf1c from Segestria florentina (Tube-web spider).